A 104-amino-acid polypeptide reads, in one-letter code: Turripeptide OL55 (104 aa).

Post-translationally, contains 8 disulfide bonds. In terms of tissue distribution, expressed by the venom duct.

The protein resides in the secreted. Its function is as follows. Acts as a neurotoxin by inhibiting an ion channel. In Iotyrris olangoensis (Sea snail), this protein is Turripeptide OL55.